The chain runs to 374 residues: Potassium channel subfamily K member 9 (374 aa).

The Cytoplasmic portion of the chain corresponds to 1–8 (MKRQNVRT). Residues 9–29 (LSLIICTFTYLLVGAAVFDAL) form a helical membrane-spanning segment. Residues 30-88 (ESDYEMREEEKLKAEEIRLKGKYNISSEDYRQLELVIMQSEPHRAGVQWKFAGSFYFAI) are Extracellular-facing. Asn-53 carries N-linked (GlcNAc...) asparagine glycosylation. Residues 89 to 101 (TVITTIGYGHAAP) constitute an intramembrane region (pore-forming). Over 102 to 107 (GTDAGK) the chain is Extracellular. Residues 108-128 (AFCMFYAVLGIPLTLVMFQSL) traverse the membrane as a helical segment. Residues 129 to 158 (GERMNTFVKYLLKRIKKCCGMHSTDVSMEN) are Cytoplasmic-facing. The chain crosses the membrane as a helical span at residues 159–179 (MVTVGFFSCMGTLCIGAAAFS). The Extracellular segment spans residues 180-194 (HYEEWSFFQAYYYCF). Residues 195–207 (ITLTTIGFGDYVA) constitute an intramembrane region (pore-forming). Residues 208–218 (LQKNRALQKKP) are Extracellular-facing. Residues 219-239 (LYVAFSFMYILVGLTVIGAFL) form a helical membrane-spanning segment. At 240-374 (NLVVLRFLTM…HRLMKRRKSI (135 aa)) the chain is on the cytoplasmic side.

The protein belongs to the two pore domain potassium channel (TC 1.A.1.8) family. Homodimer. May form heterodimers with other family members.

It is found in the cell membrane. Its function is as follows. pH-dependent, voltage-insensitive, background potassium channel protein. This chain is Potassium channel subfamily K member 9 (kcnk9), found in Xenopus laevis (African clawed frog).